The primary structure comprises 426 residues: Glutamyl-tRNA reductase (426 aa).

Substrate contacts are provided by residues 49–52 (TCNR), Ser107, 112–114 (EPQ), and Gln118. Cys50 (nucleophile) is an active-site residue. 187 to 192 (GAGETI) contacts NADP(+).

Belongs to the glutamyl-tRNA reductase family. As to quaternary structure, homodimer.

The catalysed reaction is (S)-4-amino-5-oxopentanoate + tRNA(Glu) + NADP(+) = L-glutamyl-tRNA(Glu) + NADPH + H(+). Its pathway is porphyrin-containing compound metabolism; protoporphyrin-IX biosynthesis; 5-aminolevulinate from L-glutamyl-tRNA(Glu): step 1/2. Its function is as follows. Catalyzes the NADPH-dependent reduction of glutamyl-tRNA(Glu) to glutamate 1-semialdehyde (GSA). This Ectopseudomonas mendocina (strain ymp) (Pseudomonas mendocina) protein is Glutamyl-tRNA reductase.